Here is a 299-residue protein sequence, read N- to C-terminus: tRNA dimethylallyltransferase (299 aa).

10–17 (GPTAVGKT) provides a ligand contact to ATP. 12 to 17 (TAVGKT) is a substrate binding site. The interaction with substrate tRNA stretch occupies residues 35-38 (DSQQ).

Belongs to the IPP transferase family. In terms of assembly, monomer. Requires Mg(2+) as cofactor.

The enzyme catalyses adenosine(37) in tRNA + dimethylallyl diphosphate = N(6)-dimethylallyladenosine(37) in tRNA + diphosphate. Its function is as follows. Catalyzes the transfer of a dimethylallyl group onto the adenine at position 37 in tRNAs that read codons beginning with uridine, leading to the formation of N6-(dimethylallyl)adenosine (i(6)A). This is tRNA dimethylallyltransferase from Streptococcus thermophilus (strain ATCC BAA-250 / LMG 18311).